A 326-amino-acid chain; its full sequence is Zona pellucida-binding protein 2 (326 aa).

A signal peptide spans 1–20; the sequence is MLAWALLSAVLWSLAGVGSA. N-linked (GlcNAc...) asparagine glycosylation is found at Asn-86, Asn-220, and Asn-256.

The protein belongs to the zona pellucida-binding protein Sp38 family. In terms of processing, N-glycosylated.

The protein localises to the secreted. Its subcellular location is the cytoplasmic vesicle. It is found in the secretory vesicle. It localises to the acrosome. Its function is as follows. Is implicated in sperm-oocyte interaction during fertilization. In Rattus norvegicus (Rat), this protein is Zona pellucida-binding protein 2 (Zpbp2).